The primary structure comprises 406 residues: Tryptophan 2,3-dioxygenase (406 aa).

Substrate-binding positions include 72–76 (FIITH) and R144. Heme is bound at residue H328. T342 contributes to the substrate binding site.

This sequence belongs to the tryptophan 2,3-dioxygenase family. As to quaternary structure, homotetramer. Dimer of dimers. Requires heme as cofactor.

It catalyses the reaction L-tryptophan + O2 = N-formyl-L-kynurenine. It participates in amino-acid degradation; L-tryptophan degradation via kynurenine pathway; L-kynurenine from L-tryptophan: step 1/2. In terms of biological role, heme-dependent dioxygenase that catalyzes the oxidative cleavage of the L-tryptophan (L-Trp) pyrrole ring and converts L-tryptophan to N-formyl-L-kynurenine. Catalyzes the oxidative cleavage of the indole moiety. This is Tryptophan 2,3-dioxygenase from Homo sapiens (Human).